Reading from the N-terminus, the 246-residue chain is Probable H/ACA ribonucleoprotein complex subunit 1-like protein (246 aa).

Disordered stretches follow at residues 1–61 (MSFR…GGYD) and 155–246 (PQVG…TKFD). RGG-box regions lie at residues 4–59 (RGGR…GRGG) and 161–223 (RGRG…RGRG). A compositionally biased stretch (basic and acidic residues) spans 168–180 (RGGDRGRGGDRGR). Residues 181–221 (GGFGGRGGGGGGFRGGSRGGFGGGDRGGFRGGRGGDFGGRG) show a composition bias toward gly residues.

Belongs to the GAR1 family. In terms of assembly, component of the small nucleolar ribonucleoprotein particle containing H/ACA-type snoRNAs (H/ACA snoRNPs).

It is found in the nucleus. The protein localises to the nucleolus. In terms of biological role, required for ribosome biogenesis. Part of a complex which catalyzes pseudouridylation of rRNA. This involves the isomerization of uridine such that the ribose is subsequently attached to C5, instead of the normal N1. Pseudouridine ('psi') residues may serve to stabilize the conformation of rRNAs. The polypeptide is Probable H/ACA ribonucleoprotein complex subunit 1-like protein (Caenorhabditis briggsae).